A 259-amino-acid polypeptide reads, in one-letter code: GTP cyclohydrolase FolE2 (259 aa).

Belongs to the GTP cyclohydrolase IV family.

It carries out the reaction GTP + H2O = 7,8-dihydroneopterin 3'-triphosphate + formate + H(+). The protein operates within cofactor biosynthesis; 7,8-dihydroneopterin triphosphate biosynthesis; 7,8-dihydroneopterin triphosphate from GTP: step 1/1. Its function is as follows. Converts GTP to 7,8-dihydroneopterin triphosphate. This Thermosipho africanus (strain TCF52B) protein is GTP cyclohydrolase FolE2.